The sequence spans 507 residues: ATP synthase subunit alpha (507 aa).

An ATP-binding site is contributed by 168–175; it reads GDRQTGKT.

Belongs to the ATPase alpha/beta chains family. As to quaternary structure, F-type ATPases have 2 components, CF(1) - the catalytic core - and CF(0) - the membrane proton channel. CF(1) has five subunits: alpha(3), beta(3), gamma(1), delta(1), epsilon(1). CF(0) has three main subunits: a(1), b(2) and c(9-12). The alpha and beta chains form an alternating ring which encloses part of the gamma chain. CF(1) is attached to CF(0) by a central stalk formed by the gamma and epsilon chains, while a peripheral stalk is formed by the delta and b chains.

The protein localises to the cell membrane. It carries out the reaction ATP + H2O + 4 H(+)(in) = ADP + phosphate + 5 H(+)(out). Its function is as follows. Produces ATP from ADP in the presence of a proton gradient across the membrane. The alpha chain is a regulatory subunit. This Mesomycoplasma hyopneumoniae (strain 7448) (Mycoplasma hyopneumoniae) protein is ATP synthase subunit alpha.